Consider the following 443-residue polypeptide: Putative transporter AmpG 1 (443 aa).

12 helical membrane passes run 6 to 26 (HVCI…MITG), 43 to 63 (IGIL…APVF), 74 to 96 (ILGH…TSIL), 106 to 128 (VLLS…ILSA), 144 to 164 (GIYI…AIYL), 172 to 192 (KIYQ…ILVS), 255 to 275 (DISL…YRLP), 300 to 320 (VCKF…GIIM), 326 to 346 (LYSI…FILL), 355 to 375 (ILFI…TAYI), 394 to 414 (LSSM…YMVV), and 416 to 436 (FGWQ…LLIL).

This sequence belongs to the major facilitator superfamily.

It localises to the cell inner membrane. This Rickettsia typhi (strain ATCC VR-144 / Wilmington) protein is Putative transporter AmpG 1 (ampG1).